A 416-amino-acid polypeptide reads, in one-letter code: S-adenosylmethionine synthase (416 aa).

His-14 provides a ligand contact to ATP. A Mg(2+)-binding site is contributed by Asp-16. Glu-42 serves as a coordination point for K(+). L-methionine contacts are provided by Glu-55 and Gln-98. Residues 98–108 are flexible loop; it reads QSPDIARGVDT. ATP-binding positions include 173–175, 249–250, Asp-258, 264–265, Ala-281, and Lys-285; these read DGK, KF, and RK. Asp-258 contacts L-methionine. Lys-289 contacts L-methionine.

This sequence belongs to the AdoMet synthase family. In terms of assembly, homotetramer; dimer of dimers. Mg(2+) is required as a cofactor. Requires K(+) as cofactor.

It localises to the cytoplasm. The catalysed reaction is L-methionine + ATP + H2O = S-adenosyl-L-methionine + phosphate + diphosphate. It participates in amino-acid biosynthesis; S-adenosyl-L-methionine biosynthesis; S-adenosyl-L-methionine from L-methionine: step 1/1. Functionally, catalyzes the formation of S-adenosylmethionine (AdoMet) from methionine and ATP. The overall synthetic reaction is composed of two sequential steps, AdoMet formation and the subsequent tripolyphosphate hydrolysis which occurs prior to release of AdoMet from the enzyme. In Thermosynechococcus vestitus (strain NIES-2133 / IAM M-273 / BP-1), this protein is S-adenosylmethionine synthase.